Consider the following 247-residue polypeptide: MAAAIASGLIRQKRQAREQHWDRPSASRRRSSPSKNRGLCNGNLVDIFSKVRIFGLKKRRLRRQDPQLKGIVTRLYCRQGYYLQMHPDGALDGTKDDSTNSTLFNLIPVGLRVVAIQGVKTGLYIAMNGEGYLYPSELFTPECKFKESVFENYYVIYSSMLYRQQESGRAWFLGLNKEGQAMKGNRVKKTKPAAHFLPKPLEVAMYREPSLHDVGETVPKPGVTPSKSTSASAIMNGGKPVNKSKTT.

Disordered regions lie at residues 1-38 (MAAA…KNRG) and 214-247 (VGET…SKTT). Over residues 15 to 25 (QAREQHWDRPS) the composition is skewed to basic and acidic residues.

It belongs to the heparin-binding growth factors family. In terms of assembly, interacts with SCN8A. Nervous system.

It is found in the nucleus. In terms of biological role, probably involved in nervous system development and function. In Homo sapiens (Human), this protein is Fibroblast growth factor 14 (FGF14).